Reading from the N-terminus, the 310-residue chain is HTH-type transcriptional activator TtdR (310 aa).

An HTH lysR-type domain is found at 6–63 (PLAKDLQVLVEIVHSGSFSAAAATLGQTPAFVTKRIQILENTLATTLLNRSARGVALT). The segment at residues 23 to 42 (FSAAAATLGQTPAFVTKRIQ) is a DNA-binding region (H-T-H motif).

It belongs to the LysR transcriptional regulatory family.

In terms of biological role, positive regulator required for L-tartrate-dependent anaerobic growth on glycerol. Induces expression of the ttdA-ttdB-ygjE operon. The protein is HTH-type transcriptional activator TtdR (ttdR) of Escherichia coli O6:K15:H31 (strain 536 / UPEC).